A 196-amino-acid polypeptide reads, in one-letter code: uncharacterized protein (196 aa).

The protein belongs to the flavoredoxin family. Requires FMN as cofactor.

This is an uncharacterized protein from Aquifex aeolicus (strain VF5).